The following is a 432-amino-acid chain: Adenylosuccinate synthetase (432 aa).

Residues 12 to 18 (GDEGKGK) and 40 to 42 (GHT) contribute to the GTP site. D13 serves as the catalytic Proton acceptor. Positions 13 and 40 each coordinate Mg(2+). Residues 13–16 (DEGK), 38–41 (NAGH), T126, R140, Q219, T234, and R300 contribute to the IMP site. H41 (proton donor) is an active-site residue. 296–302 (STTGRPR) is a substrate binding site. GTP-binding positions include R302, 328–330 (KLD), and 410–412 (STG).

Belongs to the adenylosuccinate synthetase family. Homodimer. It depends on Mg(2+) as a cofactor.

Its subcellular location is the cytoplasm. It catalyses the reaction IMP + L-aspartate + GTP = N(6)-(1,2-dicarboxyethyl)-AMP + GDP + phosphate + 2 H(+). Its pathway is purine metabolism; AMP biosynthesis via de novo pathway; AMP from IMP: step 1/2. Plays an important role in the de novo pathway of purine nucleotide biosynthesis. Catalyzes the first committed step in the biosynthesis of AMP from IMP. The protein is Adenylosuccinate synthetase of Aquifex aeolicus (strain VF5).